Consider the following 432-residue polypeptide: Short/branched chain specific acyl-CoA dehydrogenase, mitochondrial (432 aa).

Residues 1–33 (MEGLAVRLLRGSRLLRRNFLTCLSSWKIPPHVS) constitute a mitochondrion transit peptide. The residue at position 70 (Lys70) is an N6-acetyllysine; alternate. Lys70 bears the N6-succinyllysine; alternate mark. FAD is bound by residues 174-183 (FCLSEAGAGS) and 207-209 (WIS). Residue Ser183 participates in substrate binding. A Phosphoserine modification is found at Ser183. Substrate contacts are provided by Tyr229 and Tyr283. Position 284 is an N6-acetyllysine; alternate (Lys284). The residue at position 284 (Lys284) is an N6-succinyllysine; alternate. 291-294 (NEGR) is a substrate binding site. Residues Arg319, Gln330, and 387-391 (EWMGG) each bind FAD. Glu414 acts as the Proton acceptor in catalysis. 416–418 (ASN) provides a ligand contact to FAD. Lys426 carries the N6-acetyllysine modification.

Belongs to the acyl-CoA dehydrogenase family. In terms of assembly, homotetramer. Requires FAD as cofactor. In terms of tissue distribution, ubiquitously expressed.

The protein resides in the mitochondrion matrix. It catalyses the reaction 2-methylbutanoyl-CoA + oxidized [electron-transfer flavoprotein] + H(+) = (2E)-2-methylbut-2-enoyl-CoA + reduced [electron-transfer flavoprotein]. It carries out the reaction (2S)-2-methylbutanoyl-CoA + oxidized [electron-transfer flavoprotein] + H(+) = (2E)-2-methylbut-2-enoyl-CoA + reduced [electron-transfer flavoprotein]. The enzyme catalyses (2R)-2-methylbutanoyl-CoA + oxidized [electron-transfer flavoprotein] + H(+) = ethylacryloyl-CoA + reduced [electron-transfer flavoprotein]. The catalysed reaction is butanoyl-CoA + oxidized [electron-transfer flavoprotein] + H(+) = (2E)-butenoyl-CoA + reduced [electron-transfer flavoprotein]. It catalyses the reaction 2-methylpropanoyl-CoA + oxidized [electron-transfer flavoprotein] + H(+) = 2-methylpropenoyl-CoA + reduced [electron-transfer flavoprotein]. It carries out the reaction hexanoyl-CoA + oxidized [electron-transfer flavoprotein] + H(+) = (2E)-hexenoyl-CoA + reduced [electron-transfer flavoprotein]. The enzyme catalyses 2-methylhexanoyl-CoA + oxidized [electron-transfer flavoprotein] + H(+) = 2-methylhexenoyl-CoA + reduced [electron-transfer flavoprotein]. The catalysed reaction is valproyl-CoA + oxidized [electron-transfer flavoprotein] + H(+) = (2E)-2-propylpent-2-enoyl-CoA + reduced [electron-transfer flavoprotein]. It functions in the pathway lipid metabolism; mitochondrial fatty acid beta-oxidation. The protein operates within amino-acid degradation; L-isoleucine degradation. Competitively inhibited by valproyl-CoA. Short and branched chain specific acyl-CoA dehydrogenase that catalyzes the removal of one hydrogen from C-2 and C-3 of the fatty acyl-CoA thioester, resulting in the formation of trans-2-enoyl-CoA. Among the different mitochondrial acyl-CoA dehydrogenases, acts specifically on short and branched chain acyl-CoA derivatives such as (S)-2-methylbutyryl-CoA as well as short straight chain acyl-CoAs such as butyryl-CoA. Plays an important role in the metabolism of L-isoleucine by catalyzing the dehydrogenation of 2-methylbutyryl-CoA, one of the steps of the L-isoleucine catabolic pathway. Can also act on valproyl-CoA, a metabolite of valproic acid, an antiepileptic drug. The chain is Short/branched chain specific acyl-CoA dehydrogenase, mitochondrial from Homo sapiens (Human).